The chain runs to 325 residues: Mitochondrial thiamine pyrophosphate carrier 1 (325 aa).

Solcar repeat units lie at residues 12-111 (GSRL…TTLL), 122-209 (PPSA…LRPH), and 216-312 (PFSS…ALKF). 6 helical membrane passes run 17-35 (VTAA…IAPL), 92-108 (LLYV…YRTT), 127-143 (SFVA…AATY), 184-200 (VWDR…SFFF), 223-239 (VART…TFPL), and 287-304 (GLTV…VTMW).

The protein belongs to the mitochondrial carrier (TC 2.A.29) family.

The protein localises to the mitochondrion inner membrane. Mitochondrial transporter that mediates uptake of thiamine pyrophosphate (ThPP) into mitochondria. This Chaetomium globosum (strain ATCC 6205 / CBS 148.51 / DSM 1962 / NBRC 6347 / NRRL 1970) (Soil fungus) protein is Mitochondrial thiamine pyrophosphate carrier 1 (TPC1).